A 353-amino-acid polypeptide reads, in one-letter code: N6-methyladenosine RNA demethylase ALKB1 (353 aa).

The 130-residue stretch at 223–352 folds into the Fe2OG dioxygenase domain; that stretch reads IAQAAIVNFY…RINLNVRQMR (130 aa). H241, D243, and H308 together coordinate Fe cation. R343 is a 2-oxoglutarate binding site.

Belongs to the alkB family. Requires Fe(2+) as cofactor.

It localises to the cytoplasm. The protein resides in the P-body. It catalyses the reaction an N(6)-methyladenosine in mRNA + 2-oxoglutarate + O2 = an adenosine in mRNA + formaldehyde + succinate + CO2. Functionally, RNA demethylase that regulates the stability of mRNAs through an m(6)A-dependent manner. M6A is a modification present at internal sites of mRNAs and some non-coding RNAs and plays a role in mRNA stability and processing. Plays a role in pathogenicity towards plant host. The chain is N6-methyladenosine RNA demethylase ALKB1 from Pyricularia oryzae (strain 70-15 / ATCC MYA-4617 / FGSC 8958) (Rice blast fungus).